The sequence spans 153 residues: Proline-rich membrane anchor 1 (153 aa).

Residues 1–35 (MLLRDLVPRHGCCWPSLLLHCALHPLWGLVQVTHA) form the signal peptide. Topologically, residues 36 to 92 (EPQKSCSKVTDSCQHICQCRPPPPLPPPPPPPPPPRLLSAPAPNSTSCPAEDSWWSG) are extracellular. The region spanning 56–70 (PPPPLPPPPPPPPPP) is the PRAD domain. The segment covering 59-71 (PLPPPPPPPPPPR) has biased composition (pro residues). The disordered stretch occupies residues 59 to 79 (PLPPPPPPPPPPRLLSAPAPN). N-linked (GlcNAc...) asparagine glycosylation occurs at Asn-79. A helical transmembrane segment spans residues 93–113 (LVIIVAVVCASLVFLTVLVII). Over 114–153 (CYKAIKRKPLRKDENGTSVAEYPMSSSQSHKGVDVNAAVV) the chain is Cytoplasmic. The tract at residues 129-153 (GTSVAEYPMSSSQSHKGVDVNAAVV) is disordered.

Interacts with ACHE, probably through disulfide bonds. In terms of tissue distribution, predominantly expressed in the central nervous system, including in the brain. Also expressed in muscle, heart and kidney. Isoform 1 may be predominant in the cortex and striatum, while isoform 2 is more abundant in the cerebellum.

The protein resides in the cell membrane. The protein localises to the cell junction. It is found in the synapse. Functionally, required to anchor acetylcholinesterase (ACHE) to the basal lamina of the neuromuscular junction and to the membrane of neuronal synapses in brain. Also able to organize ACHE into tetramers. In Mus musculus (Mouse), this protein is Proline-rich membrane anchor 1 (Prima1).